The following is a 197-amino-acid chain: Glycerol-3-phosphate acyltransferase (197 aa).

5 consecutive transmembrane segments (helical) span residues 1 to 21 (MDFI…GLLI), 50 to 70 (LGFA…VLAA), 82 to 102 (IVCL…YLGF), 112 to 132 (LGVF…VFAA), and 159 to 179 (GASQ…WIKH).

This sequence belongs to the PlsY family. In terms of assembly, probably interacts with PlsX.

Its subcellular location is the cell inner membrane. It carries out the reaction an acyl phosphate + sn-glycerol 3-phosphate = a 1-acyl-sn-glycero-3-phosphate + phosphate. The protein operates within lipid metabolism; phospholipid metabolism. Functionally, catalyzes the transfer of an acyl group from acyl-phosphate (acyl-PO(4)) to glycerol-3-phosphate (G3P) to form lysophosphatidic acid (LPA). This enzyme utilizes acyl-phosphate as fatty acyl donor, but not acyl-CoA or acyl-ACP. This Desulfotalea psychrophila (strain LSv54 / DSM 12343) protein is Glycerol-3-phosphate acyltransferase.